A 194-amino-acid polypeptide reads, in one-letter code: Probable GTP-binding protein EngB (194 aa).

Residues 22–194 (DLPEYALAGR…AWQFIKEGME (173 aa)) enclose the EngB-type G domain. Residues 30–37 (GRSNVGKS), 57–61 (GKTQT), 75–78 (DVPG), 142–145 (TKAD), and 174–176 (FSS) contribute to the GTP site. Ser37 and Thr59 together coordinate Mg(2+).

Belongs to the TRAFAC class TrmE-Era-EngA-EngB-Septin-like GTPase superfamily. EngB GTPase family. Mg(2+) serves as cofactor.

In terms of biological role, necessary for normal cell division and for the maintenance of normal septation. In Listeria monocytogenes serotype 4b (strain CLIP80459), this protein is Probable GTP-binding protein EngB.